We begin with the raw amino-acid sequence, 163 residues long: Crossover junction endodeoxyribonuclease RuvC (163 aa).

Active-site residues include Asp7, Glu67, and Asp140. The Mg(2+) site is built by Asp7, Glu67, and Asp140.

It belongs to the RuvC family. As to quaternary structure, homodimer which binds Holliday junction (HJ) DNA. The HJ becomes 2-fold symmetrical on binding to RuvC with unstacked arms; it has a different conformation from HJ DNA in complex with RuvA. In the full resolvosome a probable DNA-RuvA(4)-RuvB(12)-RuvC(2) complex forms which resolves the HJ. The cofactor is Mg(2+).

Its subcellular location is the cytoplasm. It carries out the reaction Endonucleolytic cleavage at a junction such as a reciprocal single-stranded crossover between two homologous DNA duplexes (Holliday junction).. Its function is as follows. The RuvA-RuvB-RuvC complex processes Holliday junction (HJ) DNA during genetic recombination and DNA repair. Endonuclease that resolves HJ intermediates. Cleaves cruciform DNA by making single-stranded nicks across the HJ at symmetrical positions within the homologous arms, yielding a 5'-phosphate and a 3'-hydroxyl group; requires a central core of homology in the junction. The consensus cleavage sequence is 5'-(A/T)TT(C/G)-3'. Cleavage occurs on the 3'-side of the TT dinucleotide at the point of strand exchange. HJ branch migration catalyzed by RuvA-RuvB allows RuvC to scan DNA until it finds its consensus sequence, where it cleaves and resolves the cruciform DNA. The chain is Crossover junction endodeoxyribonuclease RuvC from Petrotoga mobilis (strain DSM 10674 / SJ95).